Reading from the N-terminus, the 65-residue chain is uncharacterized protein (65 aa).

Transmembrane regions (helical) follow at residues 12–31 and 41–63; these read IVKWLIFTILLVASISLIVV and LVARATPLAIVVGLSAIAAAIIV.

It localises to the cell membrane. This is an uncharacterized protein from Halalkalibacterium halodurans (strain ATCC BAA-125 / DSM 18197 / FERM 7344 / JCM 9153 / C-125) (Bacillus halodurans).